The sequence spans 459 residues: ATP synthase subunit beta (459 aa).

148–155 (GGAGVGKT) lines the ATP pocket.

This sequence belongs to the ATPase alpha/beta chains family. In terms of assembly, F-type ATPases have 2 components, CF(1) - the catalytic core - and CF(0) - the membrane proton channel. CF(1) has five subunits: alpha(3), beta(3), gamma(1), delta(1), epsilon(1). CF(0) has three main subunits: a(1), b(2) and c(9-12). The alpha and beta chains form an alternating ring which encloses part of the gamma chain. CF(1) is attached to CF(0) by a central stalk formed by the gamma and epsilon chains, while a peripheral stalk is formed by the delta and b chains.

The protein resides in the cell inner membrane. It catalyses the reaction ATP + H2O + 4 H(+)(in) = ADP + phosphate + 5 H(+)(out). Produces ATP from ADP in the presence of a proton gradient across the membrane. The catalytic sites are hosted primarily by the beta subunits. The polypeptide is ATP synthase subunit beta (Burkholderia mallei (strain NCTC 10229)).